A 166-amino-acid chain; its full sequence is Interferon gamma (166 aa).

A signal peptide spans 1-23 (MNYTTICLAFQLCVIFCSSGYYC). Gln24 carries the pyrrolidone carboxylic acid modification. N-linked (GlcNAc...) asparagine glycans are attached at residues Asn39, Asn106, and Asn107.

This sequence belongs to the type II (or gamma) interferon family. Homodimer. Interacts with IFNGR1 (via extracellular domain); this interaction promotes IFNGR1 dimerization.

Its subcellular location is the secreted. In terms of biological role, type II interferon produced by immune cells such as T-cells and NK cells that plays crucial roles in antimicrobial, antiviral, and antitumor responses by activating effector immune cells and enhancing antigen presentation. Primarily signals through the JAK-STAT pathway after interaction with its receptor IFNGR1 to affect gene regulation. Upon IFNG binding, IFNGR1 intracellular domain opens out to allow association of downstream signaling components JAK2, JAK1 and STAT1, leading to STAT1 activation, nuclear translocation and transcription of IFNG-regulated genes. Many of the induced genes are transcription factors such as IRF1 that are able to further drive regulation of a next wave of transcription. Plays a role in class I antigen presentation pathway by inducing a replacement of catalytic proteasome subunits with immunoproteasome subunits. In turn, increases the quantity, quality, and repertoire of peptides for class I MHC loading. Increases the efficiency of peptide generation also by inducing the expression of activator PA28 that associates with the proteasome and alters its proteolytic cleavage preference. Up-regulates as well MHC II complexes on the cell surface by promoting expression of several key molecules such as cathepsins B/CTSB, H/CTSH, and L/CTSL. Participates in the regulation of hematopoietic stem cells during development and under homeostatic conditions by affecting their development, quiescence, and differentiation. The chain is Interferon gamma (IFNG) from Mustela putorius furo (European domestic ferret).